A 205-amino-acid chain; its full sequence is Putative lipoprotein LppC (205 aa).

A signal peptide spans 1-27; that stretch reads MESPMTSTLHRTPLATAGLALVVALGG. Cys28 carries N-palmitoyl cysteine lipidation. Residue Cys28 is the site of S-diacylglycerol cysteine attachment. The interval 126-145 is disordered; the sequence is GSTADGQTPAGGHSVPNSGG.

The protein belongs to the UPF0098 family.

The protein localises to the cell membrane. This chain is Putative lipoprotein LppC (lppC), found in Mycobacterium tuberculosis (strain CDC 1551 / Oshkosh).